An 88-amino-acid chain; its full sequence is Prolevitide (88 aa).

An N-terminal signal peptide occupies residues 1–20 (MYKGIFLCVLFAVICANSLA). Gln74 is modified (pyrrolidone carboxylic acid). Gln87 carries the glutamine amide modification.

This sequence belongs to the gastrin/cholecystokinin family. As to expression, expressed by the skin glands.

It is found in the secreted. The polypeptide is Prolevitide (Xenopus laevis (African clawed frog)).